The sequence spans 264 residues: Glutamate racemase (264 aa).

Residues 10 to 11 (DS) and 42 to 43 (YG) each bind substrate. Cys-73 serves as the catalytic Proton donor/acceptor. Residue 74 to 75 (NT) participates in substrate binding. Cys-183 functions as the Proton donor/acceptor in the catalytic mechanism. 184 to 185 (TH) provides a ligand contact to substrate.

The protein belongs to the aspartate/glutamate racemases family.

The enzyme catalyses L-glutamate = D-glutamate. The protein operates within cell wall biogenesis; peptidoglycan biosynthesis. In terms of biological role, provides the (R)-glutamate required for cell wall biosynthesis. This Streptococcus agalactiae serotype Ia (strain ATCC 27591 / A909 / CDC SS700) protein is Glutamate racemase.